We begin with the raw amino-acid sequence, 79 residues long: Dolichyl-diphosphooligosaccharide--protein glycosyltransferase subunit TMEM258 (79 aa).

An N-acetylmethionine modification is found at Met1. The next 2 helical transmembrane spans lie at 17–37 (VFPH…AWFF) and 59–79 (VASL…GIYI).

It belongs to the OST5 family. Component of the oligosaccharyltransferase (OST) complex. OST exists in two different complex forms which contain common core subunits RPN1, RPN2, OST48, OST4, DAD1 and TMEM258, either STT3A or STT3B as catalytic subunits, and form-specific accessory subunits. STT3A complex assembly occurs through the formation of 3 subcomplexes. Subcomplex 1 contains RPN1 and TMEM258, subcomplex 2 contains the STT3A-specific subunits STT3A, DC2/OSTC, and KCP2 as well as the core subunit OST4, and subcomplex 3 contains RPN2, DAD1, and OST48. The STT3A complex can form stable complexes with the Sec61 complex or with both the Sec61 and TRAP complexes.

It localises to the membrane. It is found in the endoplasmic reticulum. The protein resides in the cytoplasm. The protein operates within protein modification; protein glycosylation. Functionally, subunit of the oligosaccharyl transferase (OST) complex that catalyzes the initial transfer of a defined glycan (Glc(3)Man(9)GlcNAc(2) in eukaryotes) from the lipid carrier dolichol-pyrophosphate to an asparagine residue within an Asn-X-Ser/Thr consensus motif in nascent polypeptide chains, the first step in protein N-glycosylation. N-glycosylation occurs cotranslationally and the complex associates with the Sec61 complex at the channel-forming translocon complex that mediates protein translocation across the endoplasmic reticulum (ER). All subunits are required for a maximal enzyme activity. Involved in ER homeostasis in the colonic epithelium. The chain is Dolichyl-diphosphooligosaccharide--protein glycosyltransferase subunit TMEM258 from Bos taurus (Bovine).